We begin with the raw amino-acid sequence, 309 residues long: Protoheme IX farnesyltransferase (309 aa).

Transmembrane regions (helical) follow at residues 35–55, 64–84, 114–134, 135–155, 161–181, 187–207, 231–251, 253–273, and 289–309; these read IGIV…AFYF, LHLV…SCAI, VLWL…MTTV, TAAV…TLWT, INTV…WTAV, IVPL…FLAL, MTKR…FYLF, LGVP…LLGL, and FVYS…ATLW.

This sequence belongs to the UbiA prenyltransferase family. Protoheme IX farnesyltransferase subfamily. Interacts with CtaA.

Its subcellular location is the cell membrane. The enzyme catalyses heme b + (2E,6E)-farnesyl diphosphate + H2O = Fe(II)-heme o + diphosphate. The protein operates within porphyrin-containing compound metabolism; heme O biosynthesis; heme O from protoheme: step 1/1. Converts heme B (protoheme IX) to heme O by substitution of the vinyl group on carbon 2 of heme B porphyrin ring with a hydroxyethyl farnesyl side group. The chain is Protoheme IX farnesyltransferase from Geobacillus kaustophilus (strain HTA426).